The following is a 295-amino-acid chain: N-acetylmuramic acid 6-phosphate etherase (295 aa).

The region spanning 54-217 (VIASFRQGGR…STASMIGIGK (164 aa)) is the SIS domain. Glutamate 82 (proton donor) is an active-site residue. Glutamate 113 is an active-site residue.

This sequence belongs to the GCKR-like family. MurNAc-6-P etherase subfamily. In terms of assembly, homodimer.

It catalyses the reaction N-acetyl-D-muramate 6-phosphate + H2O = N-acetyl-D-glucosamine 6-phosphate + (R)-lactate. The protein operates within amino-sugar metabolism; N-acetylmuramate degradation. Functionally, specifically catalyzes the cleavage of the D-lactyl ether substituent of MurNAc 6-phosphate, producing GlcNAc 6-phosphate and D-lactate. The sequence is that of N-acetylmuramic acid 6-phosphate etherase from Geobacillus sp. (strain WCH70).